Here is a 1416-residue protein sequence, read N- to C-terminus: MATTIQNNFRIRRNFGKINKIAEIPNLIAIQKSSYDKFLQADVPPEKREDTGLQGVFKSVFPIKDFNETSSLEFVSYHLEKPKYDVDECHQRGMTYSAPIKVVVRLVVWDKDEETGAQSIRDVKEQEVYFGEIPLMTENGTFIINGTERVVVSQLHRSPGAFFDHDKGKSHSSGKLLFNARIIPYRGSWIDFEFDHKDILYVRIDRRRKLPATVLLRALGGVPDTAKKTPIEFHGSAEEILKYYYDTETIRIEGKGKFEKDLNPDLLKGQRATRDIRDPKTNEIVVKKNRKFTESAIKKLVAAKMKSLPIEPEEVYTKISAEDVVDEQTGEVLLEVNEEVSEEKLEELRKRGIGEFKVLFIDNLNVLPSLRDTLMQDKISTPEEAIMEIYRRLRPGDPPTPETATNLFVNLFFNAERYDLSKVGRLKLNYKFGIEEPLDNTVVTKRDILEVVRFLIDLKNGTPNKDVDDIDHLGNRRVRAVGELLENQYRIGLVRMERAIKERMSLQEIETLMPHDLINAKPVTAVIKEFFGSSQLSQFMDQTNPLSEVTHKRRLSALGPGGLTRERAGFEVRDVHSTHYGRICPIETPEGPNIGLIASLSTYARVNEYGFVETPYRKVEKGRVTDEVSFYSALEEEKHIIAQANAPVDKKGVFTGNIVSCRKEGEYINARPDEVDLMDVSPNQLVSVAASLVPFLENDDANRALMGSNMQRQAVPLLRTRAPLVGTGIEGIVARDSGVCVVAKRDGVIQSVDAARIVVKADVPTSATDVANEVDIYNLIKYQRSNQNTCINQKPIVKPGERVKKGDVIADGPATEMGELALGQNVVVAFMPWQGYNFEDSILLSERFLKDDVFTSVHIEEFECVARDTKLGKEEITRDIPNVGEEALKDLDESGIIRIGAEVKPGDILVGKITPKGETQLSPEEKLLRAIFGEKAGDVRDSSLRVPPGVSGTVINAKVFSRKGVEKDERAKAIEEMEEAKLLKDQNDEIRIIQDSAFQKIRRLLLGKEVSGRLVDDKGNQLLKRGDVLDDALLDTVPQRYWGEIAVEGDVQDLVRKIVENFEEQKELVKLLFGEKIGRLKKGDELPPGVIKMVKVYVAIKRKLAVGDKMAGRHGNKGVVSRVLPEEDLPYLEDGRPVDIVLNPLGVPSRMNVGQILETHLGWAAKNVGWRLQEMIEKNFGPDQLRKKLKKAFEGVEGSDRLGQLIDELPAQELPKLATKLKEGMHVATPVFDGAHEDEMKALLGEGSATMQSILFDGRTGEPFDQDVTVGVMYMLKLHHLVDEKIHARSIGPYSLVTQQPLGGKAQFGGQRLGEMEVWAMEAYGAAYSLQEFLTVKSDDVVGRTRMYEAIVKGENTLESGLPESFNVLIKELQSLALDVELLETPEAKAAREQAEGELGGPLGTPRGAAAEKNTA.

Residues 1388-1416 are disordered; it reads AKAAREQAEGELGGPLGTPRGAAAEKNTA.

It belongs to the RNA polymerase beta chain family. In terms of assembly, the RNAP catalytic core consists of 2 alpha, 1 beta, 1 beta' and 1 omega subunit. When a sigma factor is associated with the core the holoenzyme is formed, which can initiate transcription.

The catalysed reaction is RNA(n) + a ribonucleoside 5'-triphosphate = RNA(n+1) + diphosphate. Its function is as follows. DNA-dependent RNA polymerase catalyzes the transcription of DNA into RNA using the four ribonucleoside triphosphates as substrates. The sequence is that of DNA-directed RNA polymerase subunit beta from Anaeromyxobacter sp. (strain Fw109-5).